The chain runs to 243 residues: tRNA (guanine-N(1)-)-methyltransferase (243 aa).

Residues Gly-108 and 127 to 132 (LGDFVL) contribute to the S-adenosyl-L-methionine site.

The protein belongs to the RNA methyltransferase TrmD family. As to quaternary structure, homodimer.

It localises to the cytoplasm. It carries out the reaction guanosine(37) in tRNA + S-adenosyl-L-methionine = N(1)-methylguanosine(37) in tRNA + S-adenosyl-L-homocysteine + H(+). Functionally, specifically methylates guanosine-37 in various tRNAs. This is tRNA (guanine-N(1)-)-methyltransferase from Streptococcus equi subsp. zooepidemicus (strain MGCS10565).